The chain runs to 610 residues: 6(G)-fructosyltransferase (610 aa).

The Cytoplasmic portion of the chain corresponds to 1–20 (MATSLQAPILGSRPPRRTLR). A helical; Signal-anchor for type II membrane protein membrane pass occupies residues 21–38 (FLSFALFSALVLVVASFS). The Vacuolar segment spans residues 39-610 (SRKSESGSGL…NQYYPFTSSN (572 aa)). Residues 79–82 (YMND), Gln98, Trp106, 141–142 (WT), and 207–208 (RD) contribute to the substrate site. The active site involves Asp82. Residues Asn215, Asn229, and Asn248 are each glycosylated (N-linked (GlcNAc...) asparagine). Residue Glu266 coordinates substrate. Asn459 is a glycosylation site (N-linked (GlcNAc...) asparagine). An intrachain disulfide couples Cys460 to Cys508. Residues Asn580 and Asn597 are each glycosylated (N-linked (GlcNAc...) asparagine).

Belongs to the glycosyl hydrolase 32 family. In terms of processing, might be processed in two N-terminal and C-terminal proteolytic fragments.

The protein localises to the vacuole membrane. It carries out the reaction [1-beta-D-fructofuranosyl-(2-&gt;1)-]m+1 alpha-D-glucopyranoside + [1-beta-D-fructofuranosyl-(2-&gt;1)-]n+1 alpha-D-glucopyranoside = [1-beta-D-fructofuranosyl-(2-&gt;1)-]m alpha-D-glucopyranoside + [1-beta-D-fructofuranosyl-(2-&gt;1)-]n+1 beta-D-fructofuranosyl-(2-&gt;6)-alpha-D-glucopyranoside (m &gt; 0, n &gt;= 0).. In terms of biological role, involved in the synthesis of fructan of the inulin neoseries. Has no 1-FFT activity. The sequence is that of 6(G)-fructosyltransferase (FT1) from Asparagus officinalis (Garden asparagus).